The sequence spans 442 residues: Trigger factor (442 aa).

In terms of domain architecture, PPIase FKBP-type spans 176–259 (GDFISLSLYV…VNAVIEISSP (84 aa)).

The protein belongs to the FKBP-type PPIase family. Tig subfamily.

The protein localises to the cytoplasm. It carries out the reaction [protein]-peptidylproline (omega=180) = [protein]-peptidylproline (omega=0). In terms of biological role, involved in protein export. Acts as a chaperone by maintaining the newly synthesized protein in an open conformation. Functions as a peptidyl-prolyl cis-trans isomerase. The chain is Trigger factor from Chlamydia trachomatis serovar A (strain ATCC VR-571B / DSM 19440 / HAR-13).